The following is a 951-amino-acid chain: Valine--tRNA ligase (951 aa).

Positions 42-52 match the 'HIGH' region motif; the sequence is PNVTGSLHMGH. Residues 554–558 carry the 'KMSKS' region motif; it reads KMSKS. Position 557 (lysine 557) interacts with ATP. Residues 880–944 are a coiled coil; the sequence is AGLINKEDEL…AEAKAKLIEQ (65 aa).

The protein belongs to the class-I aminoacyl-tRNA synthetase family. ValS type 1 subfamily. As to quaternary structure, monomer.

It localises to the cytoplasm. It carries out the reaction tRNA(Val) + L-valine + ATP = L-valyl-tRNA(Val) + AMP + diphosphate. Its function is as follows. Catalyzes the attachment of valine to tRNA(Val). As ValRS can inadvertently accommodate and process structurally similar amino acids such as threonine, to avoid such errors, it has a 'posttransfer' editing activity that hydrolyzes mischarged Thr-tRNA(Val) in a tRNA-dependent manner. The chain is Valine--tRNA ligase from Salmonella paratyphi A (strain ATCC 9150 / SARB42).